Reading from the N-terminus, the 473-residue chain is Suppressor of SWI4 1 homolog (473 aa).

A Brix domain is found at 29 to 292 (PHSFVFTRGC…LIKVQEGVGE (264 aa)). Residues S238 and S240 each carry the phosphoserine modification. The disordered stretch occupies residues 323-473 (AQRQAQQAQN…GRGRPGKRVA (151 aa)). The span at 324 to 334 (QRQAQQAQNVQ) shows a compositional bias: low complexity. Basic and acidic residues predominate over residues 335–352 (RKQEQREAHRKKSLEGMK). S359 carries the phosphoserine modification. Positions 375-388 (LGEDDDEQEDDDIE) are enriched in acidic residues. A compositionally biased stretch (basic residues) spans 409 to 421 (KRLAKSPGRKRKR). A compositionally biased stretch (basic and acidic residues) spans 422–443 (WEMDRGRGRLCDQKFPKTKDKS). K438 carries the N6-acetyllysine modification. Over residues 462–473 (GRGRGRPGKRVA) the composition is skewed to basic residues.

As to expression, widely expressed.

The protein localises to the nucleus. The protein resides in the nucleolus. In terms of biological role, may have a role in cell growth. The sequence is that of Suppressor of SWI4 1 homolog (PPAN) from Homo sapiens (Human).